Reading from the N-terminus, the 211-residue chain is Uridine kinase (211 aa).

13–20 (GGSGSGKT) contacts ATP.

The protein belongs to the uridine kinase family.

The protein resides in the cytoplasm. The catalysed reaction is uridine + ATP = UMP + ADP + H(+). The enzyme catalyses cytidine + ATP = CMP + ADP + H(+). It functions in the pathway pyrimidine metabolism; CTP biosynthesis via salvage pathway; CTP from cytidine: step 1/3. It participates in pyrimidine metabolism; UMP biosynthesis via salvage pathway; UMP from uridine: step 1/1. This chain is Uridine kinase, found in Lactobacillus johnsonii (strain CNCM I-12250 / La1 / NCC 533).